We begin with the raw amino-acid sequence, 159 residues long: Eukaryotic translation initiation factor 5A (159 aa).

Residues 1–12 (MSDEEHQFESKA) show a composition bias toward basic and acidic residues. Residues 1-23 (MSDEEHQFESKADAGASKTYPQQ) form a disordered region. Position 52 is a hypusine (K52).

Belongs to the eIF-5A family. Lys-52 undergoes hypusination, a unique post-translational modification that consists in the addition of a butylamino group from spermidine to lysine side chain, leading to the formation of the unusual amino acid hypusine. eIF-5As are the only known proteins to undergo this modification, which is essential for their function.

Functionally, translation factor that promotes translation elongation and termination, particularly upon ribosome stalling at specific amino acid sequence contexts. Binds between the exit (E) and peptidyl (P) site of the ribosome and promotes rescue of stalled ribosome: specifically required for efficient translation of polyproline-containing peptides as well as other motifs that stall the ribosome. Acts as a ribosome quality control (RQC) cofactor by joining the RQC complex to facilitate peptidyl transfer during CAT tailing step. The protein is Eukaryotic translation initiation factor 5A (EIFSV1) of Senecio vernalis (Spring groundsel).